The following is a 347-amino-acid chain: GMP reductase (347 aa).

Position 108–131 (108–131) interacts with NADP(+); it reads ADFDKMKQILALSPALKFICIDVA. K(+) contacts are provided by glycine 181 and glycine 183. Cysteine 186 serves as the catalytic Thioimidate intermediate. 216-239 contributes to the NADP(+) binding site; that stretch reads IVSDGGCSVPGDVAKAFGGGADFV.

This sequence belongs to the IMPDH/GMPR family. GuaC type 1 subfamily. As to quaternary structure, homotetramer.

It catalyses the reaction IMP + NH4(+) + NADP(+) = GMP + NADPH + 2 H(+). Catalyzes the irreversible NADPH-dependent deamination of GMP to IMP. It functions in the conversion of nucleobase, nucleoside and nucleotide derivatives of G to A nucleotides, and in maintaining the intracellular balance of A and G nucleotides. The polypeptide is GMP reductase (Yersinia enterocolitica serotype O:8 / biotype 1B (strain NCTC 13174 / 8081)).